We begin with the raw amino-acid sequence, 119 residues long: Large ribosomal subunit protein bL20 (119 aa).

This sequence belongs to the bacterial ribosomal protein bL20 family.

Binds directly to 23S ribosomal RNA and is necessary for the in vitro assembly process of the 50S ribosomal subunit. It is not involved in the protein synthesizing functions of that subunit. This chain is Large ribosomal subunit protein bL20, found in Herminiimonas arsenicoxydans.